We begin with the raw amino-acid sequence, 70 residues long: VRDAYIAQNYNCVYHCGRDAYCNELCSKNGAKSRTRGGYCHWFGPHGDACWCIDLPNNVPIKVEGKCHRK.

The 67-residue stretch at 2-68 (RDAYIAQNYN…VPIKVEGKCH (67 aa)) folds into the LCN-type CS-alpha/beta domain. Disulfide bonds link Cys12–Cys67, Cys16–Cys40, Cys22–Cys50, and Cys26–Cys52.

It belongs to the long (4 C-C) scorpion toxin superfamily. Sodium channel inhibitor family. Alpha subfamily. As to expression, expressed by the venom gland.

Its subcellular location is the secreted. In terms of biological role, alpha toxins bind voltage-independently at site-3 of sodium channels (Nav) and inhibit the inactivation of the activated channels, thereby blocking neuronal transmission. This chain is Toxin Boma6d, found in Buthus occitanus mardochei (Moroccan scorpion).